The chain runs to 292 residues: Protein rogdi homolog (292 aa).

Residues 1–12 (MEVQSLTITTNY) show a composition bias toward polar residues. The disordered stretch occupies residues 1–25 (MEVQSLTITTNYPPKPASPNPQDIR).

It belongs to the rogdi family.

It localises to the nucleus envelope. The polypeptide is Protein rogdi homolog (Caenorhabditis elegans).